The primary structure comprises 556 residues: 5-aminolevulinate synthase, mitochondrial (556 aa).

The transit peptide at 1–46 (MDSLARQSAKICPFVSRVTSSMQQVQVLHKTNMSAMAQQCPVMRRA) directs the protein to the mitochondrion. Positions 105, 218, and 237 each coordinate substrate. Residues Ser-270, His-298, and Thr-342 each coordinate pyridoxal 5'-phosphate. Residue Lys-345 is part of the active site. N6-(pyridoxal phosphate)lysine is present on Lys-345. Positions 374 and 375 each coordinate pyridoxal 5'-phosphate. Position 460 (Thr-460) interacts with substrate.

Belongs to the class-II pyridoxal-phosphate-dependent aminotransferase family. Homodimer. Requires pyridoxal 5'-phosphate as cofactor.

The protein localises to the mitochondrion matrix. It catalyses the reaction succinyl-CoA + glycine + H(+) = 5-aminolevulinate + CO2 + CoA. It participates in porphyrin-containing compound metabolism; protoporphyrin-IX biosynthesis; 5-aminolevulinate from glycine: step 1/1. Its function is as follows. Catalyzes the synthesis of 5-aminolevulinate (ALA) from succinyl-CoA and glycine, the first and rate-limiting step in heme biosynthesis. In Eremothecium gossypii (strain ATCC 10895 / CBS 109.51 / FGSC 9923 / NRRL Y-1056) (Yeast), this protein is 5-aminolevulinate synthase, mitochondrial (HEM1).